The chain runs to 672 residues: DNA ligase (672 aa).

NAD(+)-binding positions include 34–38 (DAEYD), 83–84 (SL), and Glu-117. The active-site N6-AMP-lysine intermediate is Lys-119. Positions 140, 177, 293, and 317 each coordinate NAD(+). Cys-411, Cys-414, Cys-429, and Cys-434 together coordinate Zn(2+). In terms of domain architecture, BRCT spans 591 to 672 (RVGGRFTGKT…FLAMLGVCRT (82 aa)).

It belongs to the NAD-dependent DNA ligase family. LigA subfamily. Requires Mg(2+) as cofactor. Mn(2+) serves as cofactor.

The enzyme catalyses NAD(+) + (deoxyribonucleotide)n-3'-hydroxyl + 5'-phospho-(deoxyribonucleotide)m = (deoxyribonucleotide)n+m + AMP + beta-nicotinamide D-nucleotide.. Its function is as follows. DNA ligase that catalyzes the formation of phosphodiester linkages between 5'-phosphoryl and 3'-hydroxyl groups in double-stranded DNA using NAD as a coenzyme and as the energy source for the reaction. It is essential for DNA replication and repair of damaged DNA. The sequence is that of DNA ligase from Geotalea uraniireducens (strain Rf4) (Geobacter uraniireducens).